We begin with the raw amino-acid sequence, 602 residues long: Elongation factor 4 (602 aa).

A tr-type G domain is found at 7–189 (KYIRNFCIIA…KIVDMIPCPE (183 aa)). GTP contacts are provided by residues 19–24 (DHGKST) and 136–139 (NKID).

The protein belongs to the TRAFAC class translation factor GTPase superfamily. Classic translation factor GTPase family. LepA subfamily.

The protein localises to the cell membrane. The catalysed reaction is GTP + H2O = GDP + phosphate + H(+). In terms of biological role, required for accurate and efficient protein synthesis under certain stress conditions. May act as a fidelity factor of the translation reaction, by catalyzing a one-codon backward translocation of tRNAs on improperly translocated ribosomes. Back-translocation proceeds from a post-translocation (POST) complex to a pre-translocation (PRE) complex, thus giving elongation factor G a second chance to translocate the tRNAs correctly. Binds to ribosomes in a GTP-dependent manner. The polypeptide is Elongation factor 4 (Ruminiclostridium cellulolyticum (strain ATCC 35319 / DSM 5812 / JCM 6584 / H10) (Clostridium cellulolyticum)).